The primary structure comprises 570 residues: CDKN2A-interacting protein (570 aa).

The residue at position 2 (Ala-2) is an N-acetylalanine. Residues 19–126 (VETLRCEGET…KVKKRGISSS (108 aa)) form the XRN2-binding (XTBD) domain. The segment at 122 to 345 (GISSSNEGVE…TSLLMPKSSS (224 aa)) is disordered. Ser-124 bears the Phosphoserine mark. The span at 147-162 (VERDHGKKSAKTDRSA) shows a compositional bias: basic and acidic residues. Positions 167 to 183 (SSGSKGSSTKSESSGTS) are enriched in low complexity. Lys-176 participates in a covalent cross-link: Glycyl lysine isopeptide (Lys-Gly) (interchain with G-Cter in SUMO1). Residues 184-198 (ARSNSGVSHQNSSTS) show a composition bias toward polar residues. Positions 203–221 (SVCSQSSSNSSQVTSAGSG) are enriched in low complexity. The span at 224-233 (SEPEAPDKHG) shows a compositional bias: basic and acidic residues. Residue Ser-234 is modified to Phosphoserine. Low complexity-rich tracts occupy residues 234–248 (SASFVSSLLKSSLNS) and 271–301 (SSVSVSQSSSEIEVPLLGSSGSSEVELPLLS). Residues 302 to 317 (CKSSSETASSGLTTKA) are compositionally biased toward polar residues. Residues 318 to 345 (SSEANISSSVSKNSSSSGTSLLMPKSSS) show a composition bias toward low complexity. Ser-378 is subject to Phosphoserine. The tract at residues 383–407 (SQLASKSSSQSSTSQLPSKSTSQSS) is disordered. The DRBM domain maps to 452–527 (NHGELLNAAI…SREALKLFLK (76 aa)).

It belongs to the CARF family. In terms of assembly, interacts with CDKN2A/p14ARF, p53/TP53 and MDM2. Interacts with CHEK2 and MAPK3. Interacts with XRN2. May be ubiquitinated.

Its subcellular location is the nucleus. The protein localises to the nucleoplasm. In terms of biological role, regulates DNA damage response and cell proliferation in a dose-dependent manner through a number of signaling pathways involved in cell proliferation, apoptosis and senescence. The chain is CDKN2A-interacting protein (Cdkn2aip) from Rattus norvegicus (Rat).